The primary structure comprises 103 residues: Histone H4 (103 aa).

Lysine 6 carries the post-translational modification N6-acetyl-N6-methyllysine; alternate. N6-methyllysine; alternate occurs at positions 6, 9, and 13. An N6-acetyl-N6-methyllysine; alternate modification is found at lysine 13. Residues 17–21 (KRHRK) mediate DNA binding. The residue at position 92 (lysine 92) is an N6-glutaryllysine.

Belongs to the histone H4 family. As to quaternary structure, the nucleosome is a histone octamer containing two molecules each of H2A, H2B, H3 and H4 assembled in one H3-H4 heterotetramer and two H2A-H2B heterodimers. The octamer wraps approximately 147 bp of DNA. Glutarylation at Lys-92 (H4K91glu) destabilizes nucleosomes by promoting dissociation of the H2A-H2B dimers from nucleosomes.

It is found in the nucleus. Its subcellular location is the chromosome. Its function is as follows. Core component of nucleosome. Nucleosomes wrap and compact DNA into chromatin, limiting DNA accessibility to the cellular machineries which require DNA as a template. Histones thereby play a central role in transcription regulation, DNA repair, DNA replication and chromosomal stability. DNA accessibility is regulated via a complex set of post-translational modifications of histones, also called histone code, and nucleosome remodeling. The chain is Histone H4 (ahsb4) from Blastobotrys adeninivorans (Yeast).